A 2809-amino-acid chain; its full sequence is Fibrillin-3 (2809 aa).

Residues 1 to 31 form the signal peptide; sequence MTLEGLYLARGPLARLLLAWSALLCMAGGQG. A propeptide spanning residues 32-48 is cleaved from the precursor; that stretch reads RWDGALEAAGPGRVRRR. The EGF-like 1 domain occupies 147 to 179; sequence GQPICDRGCHNGGRCIGPNRCACVYGFMGPQCE. Intrachain disulfides connect Cys-151–Cys-161, Cys-155–Cys-167, and Cys-169–Cys-178. A TB 1 domain is found at 185–237; the sequence is GPCFGQVGPEGCQHQLTGLVCTKALCCATVGRAWGLPCELCPAQPHPCRRGFI. Residues 247–288 form the EGF-like 2; calcium-binding domain; sequence DVDECQAVPGLCQGGSCVNMVGSFHCRCPVGHRLSDSSAACE. Intrachain disulfides connect Cys-251/Cys-263, Cys-258/Cys-272, and Cys-274/Cys-287. One can recognise a TB 2 domain in the interval 293–346; it reads GACFSVLFGGRCAGDLAGHYTRRQCCCDRGRCWAAGPVPELCPPRGSNEFQQLC. Asn-406 carries N-linked (GlcNAc...) asparagine glycosylation. The region spanning 408–448 is the EGF-like 3 domain; the sequence is TIDICRHFTNLCLNGRCLPTPSSYRCECNVGYTQDVRGECI. Cystine bridges form between Cys-412–Cys-424, Cys-419–Cys-433, Cys-435–Cys-447, Cys-453–Cys-463, Cys-458–Cys-472, Cys-474–Cys-487, Cys-493–Cys-505, Cys-500–Cys-514, Cys-516–Cys-529, Cys-535–Cys-546, Cys-541–Cys-555, Cys-557–Cys-570, Cys-576–Cys-587, Cys-582–Cys-596, and Cys-598–Cys-611. The EGF-like 4; calcium-binding domain occupies 449-488; sequence DVDECTSSPCHHGDCVNIPGTYHCRCYPGFQATPTRQACV. In terms of domain architecture, EGF-like 5; calcium-binding spans 489-530; it reads DVDECIVSGGLCHLGRCVNTEGSFQCVCNAGFELSPDGKNCV. The EGF-like 6; calcium-binding domain occupies 531-571; it reads DHNECATSTMCVNGVCLNEDGSFSCLCKPGFLLAPGGHYCM. The EGF-like 7; calcium-binding domain occupies 572–612; that stretch reads DIDECQTPGICVNGHCTNTEGSFRCQCLGGLAVGTDGRVCV. The region spanning 618–670 is the TB 3 domain; the sequence is STCYGAIEKGSCARPFPGTVTKSECCCANPDHGFGEPCQLCPAKDSAEFQALC. Positions 682–723 constitute an EGF-like 8; calcium-binding domain; sequence DINECALDPEVCANGVCENLRGSYRCVCNLGYEAGASGKDCT. 9 disulfide bridges follow: Cys-686-Cys-698, Cys-693-Cys-707, Cys-709-Cys-722, Cys-728-Cys-740, Cys-735-Cys-749, Cys-751-Cys-764, Cys-770-Cys-780, Cys-775-Cys-789, and Cys-791-Cys-804. Residues 724–765 form the EGF-like 9; calcium-binding domain; it reads DVDECALNSLLCDNGWCQNSPGSYSCSCPPGFHFWQDTEICK. One can recognise an EGF-like 10; calcium-binding domain in the interval 766-805; it reads DVDECLSSPCVSGVCRNLAGSYTCKCGPGSRLDPSGTFCL. The TB 4 domain maps to 810–861; it reads GTCWLKIQESRCEVNLQGASLRSECCATLGAAWGSPCERCEIDPACARGFAR. The EGF-like 11; calcium-binding domain occupies 869-910; that stretch reads DVNECESFPGVCPNGRCVNTAGSFRCECPEGLMLDASGRLCV. 3 disulfide bridges follow: Cys-873–Cys-885, Cys-880–Cys-894, and Cys-896–Cys-909. Residues 915–966 enclose the TB 5 domain; sequence EPCFLRWDEDECGVTLPGKYRMDVCCCSIGAVWGVECEACPDPESLEFASLC. In terms of domain architecture, EGF-like 12; calcium-binding spans 986–1027; that stretch reads DVNECKVFPGLCTHGTCRNTVGSFHCACAGGFALDAQERNCT. 36 cysteine pairs are disulfide-bonded: Cys-990-Cys-1002, Cys-997-Cys-1011, Cys-1013-Cys-1026, Cys-1032-Cys-1044, Cys-1039-Cys-1053, Cys-1055-Cys-1069, Cys-1075-Cys-1087, Cys-1082-Cys-1096, Cys-1098-Cys-1111, Cys-1117-Cys-1129, Cys-1124-Cys-1138, Cys-1140-Cys-1153, Cys-1159-Cys-1170, Cys-1166-Cys-1179, Cys-1181-Cys-1194, Cys-1200-Cys-1212, Cys-1207-Cys-1221, Cys-1223-Cys-1236, Cys-1242-Cys-1254, Cys-1249-Cys-1263, Cys-1265-Cys-1278, Cys-1284-Cys-1297, Cys-1291-Cys-1306, Cys-1308-Cys-1319, Cys-1325-Cys-1338, Cys-1332-Cys-1347, Cys-1349-Cys-1360, Cys-1366-Cys-1378, Cys-1373-Cys-1387, Cys-1389-Cys-1402, Cys-1408-Cys-1419, Cys-1414-Cys-1428, Cys-1430-Cys-1443, Cys-1449-Cys-1460, Cys-1455-Cys-1469, and Cys-1471-Cys-1484. The N-linked (GlcNAc...) asparagine glycan is linked to Asn-1025. An EGF-like 13; calcium-binding domain is found at 1028–1070; it reads DIDECRISPDLCGQGTCVNTPGSFECECFPGYESGFMLMKNCM. The 42-residue stretch at 1071-1112 folds into the EGF-like 14; calcium-binding domain; sequence DVDECARDPLLCRGGTCTNTDGSYKCQCPPGHELTAKGTACE. One can recognise an EGF-like 15; calcium-binding domain in the interval 1113–1154; the sequence is DIDECSLSDGLCPHGQCVNVIGAFQCSCHAGFQSTPDRQGCV. The region spanning 1155-1195 is the EGF-like 16; calcium-binding domain; sequence DINECRVQNGGCDVHCINTEGSYRCSCGQGYSLMPDGRACA. An EGF-like 17 domain is found at 1196–1237; the sequence is DVDECEENPRVCDQGHCTNMPGGHRCLCYDGFMATPDMRTCV. An EGF-like 18; calcium-binding domain is found at 1238–1279; that stretch reads DVDECDLNPHICLHGDCENTKGSFVCHCQLGYMVRKGATGCS. Residues 1280–1320 form the EGF-like 19; calcium-binding domain; the sequence is DVDECEVGGHNCDSHASCLNIPGSFSCRCLPGWVGDGFECH. Residues 1321–1361 enclose the EGF-like 20; calcium-binding domain; the sequence is DLDECVSQEHRCSPRGDCLNVPGSYRCTCRQGFAGDGFFCE. In terms of domain architecture, EGF-like 21; calcium-binding spans 1362–1403; that stretch reads DRDECAENVDLCDNGQCLNAPGGYRCECEMGFDPTEDHRACQ. The EGF-like 22; calcium-binding domain maps to 1404 to 1444; that stretch reads DVDECAQGNLCAFGSCENLPGMFRCICNGGYELDRGGGNCT. N-linked (GlcNAc...) asparagine glycosylation is present at Asn-1442. An EGF-like 23; calcium-binding domain is found at 1445-1485; the sequence is DINECADPVNCINGVCINTPGSYLCSCPQDFELNPSGVGCV. Positions 1490-1546 constitute a TB 6 domain; sequence GNCFLETHDRGDSGISCSAEIGVGVTRASCCCSLGRAWGNPCELCPMANTTEYRTLC. The N-linked (GlcNAc...) asparagine glycan is linked to Asn-1538. The EGF-like 24; calcium-binding domain maps to 1563 to 1604; the sequence is DIDECQELPGLCQGGDCVNTFGSFQCECPPGYHLSEHTRICE. Disulfide bonds link Cys-1567–Cys-1579, Cys-1574–Cys-1588, Cys-1590–Cys-1603, Cys-1609–Cys-1621, Cys-1616–Cys-1630, and Cys-1632–Cys-1645. Residues 1605–1646 enclose the EGF-like 25; calcium-binding domain; it reads DIDECSTHSGICGPGTCYNTLGNYTCVCPAEYLQVNGGNNCM. N-linked (GlcNAc...) asparagine glycosylation occurs at Asn-1627. One can recognise a TB 7 domain in the interval 1651-1703; sequence SVCFRHYNGTCQNELAFNVTRKMCCCSYNIGQAWNRPCEACPTPISPDYQILC. N-linked (GlcNAc...) asparagine glycosylation is found at Asn-1658 and Asn-1668. The region spanning 1721 to 1762 is the EGF-like 26; calcium-binding domain; it reads DIDECGEIPAICANGICINQIGSFRCECPAGFNYNSILLACE. 21 disulfide bridges follow: Cys-1725–Cys-1737, Cys-1732–Cys-1746, Cys-1748–Cys-1761, Cys-1767–Cys-1780, Cys-1774–Cys-1789, Cys-1791–Cys-1803, Cys-1809–Cys-1821, Cys-1816–Cys-1830, Cys-1832–Cys-1845, Cys-1851–Cys-1861, Cys-1856–Cys-1870, Cys-1872–Cys-1884, Cys-1890–Cys-1903, Cys-1898–Cys-1912, Cys-1914–Cys-1927, Cys-1933–Cys-1945, Cys-1940–Cys-1954, Cys-1956–Cys-1967, Cys-1973–Cys-1985, Cys-1980–Cys-1994, and Cys-1996–Cys-2009. One can recognise an EGF-like 27; calcium-binding domain in the interval 1763–1804; the sequence is DVDECGSRESPCQQNADCINIPGSYRCKCTRGYKLSPGGACV. Residues 1805–1846 form the EGF-like 28 domain; the sequence is GRNECREIPNVCSHGDCMDTEGSYMCLCHRGFQASADQTLCM. The EGF-like 29; calcium-binding domain maps to 1847–1885; it reads DIDECDRQPCGNGTCKNIIGSYNCLCFPGFVVTHNGDCV. A glycan (N-linked (GlcNAc...) asparagine) is linked at Asn-1858. The region spanning 1886–1928 is the EGF-like 30; calcium-binding domain; the sequence is DFDECTTLVGQVCRFGHCLNTAGSFHCLCQDGFELTADGKNCV. Residues 1929–1968 enclose the EGF-like 31; calcium-binding domain; it reads DTNECLSLAGTCLPGTCQNLEGSFRCICPPGFQVQSDHCI. The region spanning 1969-2010 is the EGF-like 32; calcium-binding domain; sequence DIDECSEEPNLCLFGTCTNSPGSFQCLCPPGFVLSDNGHRCF. One can recognise a TB 8 domain in the interval 2015–2068; sequence SFCFTRFEAGKCSVPKAFNTTKTRCCCSKRPGEGWGDPCELCPQEGSAAFQELC. Asn-2033 carries an N-linked (GlcNAc...) asparagine glycan. In terms of domain architecture, EGF-like 33; calcium-binding spans 2084–2125; it reads DVNECAENPGVCTNGVCVNTDGSFRCECPFGYSLDFTGINCV. 15 disulfide bridges follow: Cys-2088–Cys-2100, Cys-2095–Cys-2109, Cys-2111–Cys-2124, Cys-2130–Cys-2141, Cys-2136–Cys-2150, Cys-2152–Cys-2164, Cys-2170–Cys-2181, Cys-2177–Cys-2190, Cys-2192–Cys-2205, Cys-2211–Cys-2225, Cys-2218–Cys-2234, Cys-2236–Cys-2250, Cys-2256–Cys-2268, Cys-2263–Cys-2277, and Cys-2279–Cys-2292. The region spanning 2126-2165 is the EGF-like 34; calcium-binding domain; the sequence is DTDECSVGHPCGQGTCTNVIGGFECACADGFEPGLMMTCE. An EGF-like 35; calcium-binding domain is found at 2166–2206; that stretch reads DIDECSLNPLLCAFRCHNTEGSYLCTCPAGYTLREDGAMCR. Positions 2207 to 2251 constitute an EGF-like 36; calcium-binding domain; that stretch reads DVDECADGQQDCHARGMECKNLIGTFACVCPPGMRPLPGSGEGCT. The EGF-like 37; calcium-binding domain maps to 2252–2293; that stretch reads DDNECHAQPDLCVNGRCVNTAGSFRCDCDEGFQPSPTLTECH. Residues 2298–2351 enclose the TB 9 domain; that stretch reads GPCFAEVLQTMCRSLSSSSEAVTRAECCCGGGRGWGPRCELCPLPGTSAYRKLC. The EGF-like 38; calcium-binding domain occupies 2363-2404; that stretch reads DVDECRMLAHLCAHGECINSLGSFRCHCQAGYTPDATATTCL. 21 disulfides stabilise this stretch: Cys-2367–Cys-2379, Cys-2374–Cys-2388, Cys-2390–Cys-2403, Cys-2409–Cys-2420, Cys-2416–Cys-2429, Cys-2431–Cys-2444, Cys-2450–Cys-2461, Cys-2457–Cys-2470, Cys-2472–Cys-2483, Cys-2489–Cys-2502, Cys-2496–Cys-2511, Cys-2513–Cys-2526, Cys-2532–Cys-2542, Cys-2538–Cys-2551, Cys-2553–Cys-2566, Cys-2572–Cys-2584, Cys-2579–Cys-2593, Cys-2595–Cys-2608, Cys-2614–Cys-2625, Cys-2621–Cys-2634, and Cys-2636–Cys-2648. The EGF-like 39; calcium-binding domain occupies 2405–2445; it reads DMDECSQVPKPCTFLCKNTKGSFLCSCPRGYLLEEDGRTCK. One can recognise an EGF-like 40; calcium-binding domain in the interval 2446-2484; it reads DLDECTSRQHNCQFLCVNTVGAFTCRCPPGFTQHHQACF. The 43-residue stretch at 2485–2527 folds into the EGF-like 41; calcium-binding domain; that stretch reads DNDECSAQPGPCGAHGHCHNTPGSFRCECHQGFTLVSSGHGCE. The 40-residue stretch at 2528-2567 folds into the EGF-like 42; calcium-binding domain; that stretch reads DVNECDGPHRCQHGCQNQLGGYRCSCPQGFTQHSQWAQCV. The EGF-like 43; calcium-binding domain maps to 2568–2609; the sequence is DENECALSPPTCGSASCRNTLGGFRCVCPSGFDFDQALGGCQ. In terms of domain architecture, EGF-like 44; calcium-binding spans 2610-2649; it reads EVDECAGRRGPCSYSCANTPGGFLCGCPQGYFRAGQGHCV. N-linked (GlcNAc...) asparagine glycosylation is present at Asn-2713.

It belongs to the fibrillin family. In terms of processing, probably forms intermolecular disulfide bonds either with other FBN3 molecules or with other components of the microfibrils. Predominantly expressed in connective tissues such as skeletal muscle, tendon, skin, perichondrium and periosteum. Highly expressed in fetal lung, brain, kidney. Expressed at low level in prostate, testis, mammary gland, uterus, ovary, placenta, bladder, adrenal gland, thyroid, fetal thymus, fetal liver, liver, fetal heart and heart.

It is found in the secreted. It localises to the extracellular space. The protein localises to the extracellular matrix. Functionally, fibrillins are structural components of 10-12 nm extracellular calcium-binding microfibrils, which occur either in association with elastin or in elastin-free bundles. Fibrillin-containing microfibrils provide long-term force bearing structural support. This chain is Fibrillin-3 (FBN3), found in Homo sapiens (Human).